Here is a 259-residue protein sequence, read N- to C-terminus: 5'-nucleotidase SurE (259 aa).

4 residues coordinate a divalent metal cation: D13, D14, S44, and N100.

This sequence belongs to the SurE nucleotidase family. Requires a divalent metal cation as cofactor.

It is found in the cytoplasm. The catalysed reaction is a ribonucleoside 5'-phosphate + H2O = a ribonucleoside + phosphate. Nucleotidase that shows phosphatase activity on nucleoside 5'-monophosphates. The polypeptide is 5'-nucleotidase SurE (Bacteroides thetaiotaomicron (strain ATCC 29148 / DSM 2079 / JCM 5827 / CCUG 10774 / NCTC 10582 / VPI-5482 / E50)).